We begin with the raw amino-acid sequence, 123 residues long: Ribosome-binding factor A (123 aa).

The protein belongs to the RbfA family. Monomer. Binds 30S ribosomal subunits, but not 50S ribosomal subunits or 70S ribosomes.

Its subcellular location is the cytoplasm. Functionally, one of several proteins that assist in the late maturation steps of the functional core of the 30S ribosomal subunit. Associates with free 30S ribosomal subunits (but not with 30S subunits that are part of 70S ribosomes or polysomes). Required for efficient processing of 16S rRNA. May interact with the 5'-terminal helix region of 16S rRNA. The protein is Ribosome-binding factor A of Chlamydia trachomatis serovar A (strain ATCC VR-571B / DSM 19440 / HAR-13).